Consider the following 426-residue polypeptide: Proline--tRNA ligase (426 aa).

The protein belongs to the class-II aminoacyl-tRNA synthetase family. ProS type 2 subfamily. As to quaternary structure, homodimer.

It localises to the cytoplasm. It carries out the reaction tRNA(Pro) + L-proline + ATP = L-prolyl-tRNA(Pro) + AMP + diphosphate. Functionally, catalyzes the attachment of proline to tRNA(Pro) in a two-step reaction: proline is first activated by ATP to form Pro-AMP and then transferred to the acceptor end of tRNA(Pro). This chain is Proline--tRNA ligase, found in Ehrlichia ruminantium (strain Gardel).